The following is a 199-amino-acid chain: ATP-dependent Clp protease proteolytic subunit 2 (199 aa).

S98 acts as the Nucleophile in catalysis. Residue H123 is part of the active site.

The protein belongs to the peptidase S14 family. As to quaternary structure, fourteen ClpP subunits assemble into 2 heptameric rings which stack back to back to give a disk-like structure with a central cavity, resembling the structure of eukaryotic proteasomes.

The protein resides in the cytoplasm. The catalysed reaction is Hydrolysis of proteins to small peptides in the presence of ATP and magnesium. alpha-casein is the usual test substrate. In the absence of ATP, only oligopeptides shorter than five residues are hydrolyzed (such as succinyl-Leu-Tyr-|-NHMec, and Leu-Tyr-Leu-|-Tyr-Trp, in which cleavage of the -Tyr-|-Leu- and -Tyr-|-Trp bonds also occurs).. Its function is as follows. Cleaves peptides in various proteins in a process that requires ATP hydrolysis. Has a chymotrypsin-like activity. Plays a major role in the degradation of misfolded proteins. The chain is ATP-dependent Clp protease proteolytic subunit 2 from Treponema pallidum (strain Nichols).